Here is a 383-residue protein sequence, read N- to C-terminus: Geranylgeranyl pyrophosphate synthase esdpD (383 aa).

Residues Lys-88, Arg-91, and His-120 each contribute to the isopentenyl diphosphate site. Positions 150 and 154 each coordinate Mg(2+). Position 159 (Arg-159) interacts with dimethylallyl diphosphate. Residue Arg-160 participates in isopentenyl diphosphate binding. The dimethylallyl diphosphate site is built by Lys-237, Thr-238, and Gln-271. Asp-274 is a binding site for Mg(2+). The dimethylallyl diphosphate site is built by Asn-278, Lys-288, and Lys-298.

It belongs to the FPP/GGPP synthase family. Requires Mg(2+) as cofactor.

It catalyses the reaction isopentenyl diphosphate + dimethylallyl diphosphate = (2E)-geranyl diphosphate + diphosphate. It carries out the reaction isopentenyl diphosphate + (2E)-geranyl diphosphate = (2E,6E)-farnesyl diphosphate + diphosphate. The catalysed reaction is isopentenyl diphosphate + (2E,6E)-farnesyl diphosphate = (2E,6E,10E)-geranylgeranyl diphosphate + diphosphate. It functions in the pathway secondary metabolite biosynthesis; terpenoid biosynthesis. Functionally, geranylgeranyl pyrophosphate synthase; part of the cluster that mediates the biosynthesis of shearones, diterpenoid pyrones (DPs) which are structurally diverse meroterpenoids consisting of a diterpene linked by a pyrone, and which may exhibit a range of bioactivities. Within the pathway, esdpD takes part to the biosynthesis of the molecular scaffold by providing geranylgeranyl pyrophosphate (GGPP) to the prenyltransferase esdpC for C-3 geranylgeranylation of the alpha-pyrone. The molecular scaffold is commonly biosynthesized by a series of enzymes including the non-reducing polyketide synthase (NR-PKS) esdpA that generates an alpha-pyrone; the prenyltransferase esdpC that attaches a geranylgeranyl pyrophosphate (GGPP) produced by the GGPP synthase (GGPPS) esdpD onto the pyrone unit; the FAD-dependent monooxygenase esdpE that converts an olefin on the diterpene unit into an epoxide; and the terpene cyclase esdpB that catalyzes the cyclization reactions to give the molecular backbone shearone A. In the modification steps, esdpF oxidizes the hydroxy group to a ketone at C-3 and esdpG then attaches hydroxy groups at both C-11 and C-12. After that, esdpI hydroxylates at C-20 and esdpH hydroxylates at C-6'. The ether bridge is generated by nucleophilic attack of the hydroxy group at C-20 to the carbonyl carbon at C-3. EsdpH can also functions prior to esdpI. The different combinations of these modification enzymes lead to the production of diverse shearone derivatives, shearone I being the end product of the pathway. The alpha-ketoglutarate-dependent dioxygenase esdpJ seems not to be involved in this pathway. The chain is Geranylgeranyl pyrophosphate synthase esdpD from Penicillium shearii (Eupenicillium shearii).